We begin with the raw amino-acid sequence, 343 residues long: GTPase Obg (343 aa).

The region spanning Glu2 to Ile160 is the Obg domain. Positions Ala161–Glu332 constitute an OBG-type G domain. Residues Gly167 to Ser174, Phe192 to Ser196, Asp214 to Gly217, Asn284 to Asp287, and Ser313 to Leu315 contribute to the GTP site. Ser174 and Thr194 together coordinate Mg(2+).

Belongs to the TRAFAC class OBG-HflX-like GTPase superfamily. OBG GTPase family. In terms of assembly, monomer. The cofactor is Mg(2+).

The protein resides in the cytoplasm. Its function is as follows. An essential GTPase which binds GTP, GDP and possibly (p)ppGpp with moderate affinity, with high nucleotide exchange rates and a fairly low GTP hydrolysis rate. Plays a role in control of the cell cycle, stress response, ribosome biogenesis and in those bacteria that undergo differentiation, in morphogenesis control. The sequence is that of GTPase Obg from Aquifex aeolicus (strain VF5).